The chain runs to 276 residues: NADPH-dependent 7-cyano-7-deazaguanine reductase (276 aa).

Position 83-85 (83-85 (VES)) interacts with substrate. 85–86 (SK) contributes to the NADPH binding site. C184 serves as the catalytic Thioimide intermediate. Catalysis depends on D191, which acts as the Proton donor. 223-224 (HE) contacts substrate. An NADPH-binding site is contributed by 252-253 (RG).

It belongs to the GTP cyclohydrolase I family. QueF type 2 subfamily. In terms of assembly, homodimer.

It localises to the cytoplasm. It catalyses the reaction 7-aminomethyl-7-carbaguanine + 2 NADP(+) = 7-cyano-7-deazaguanine + 2 NADPH + 3 H(+). It functions in the pathway tRNA modification; tRNA-queuosine biosynthesis. Its function is as follows. Catalyzes the NADPH-dependent reduction of 7-cyano-7-deazaguanine (preQ0) to 7-aminomethyl-7-deazaguanine (preQ1). In Azotobacter vinelandii (strain DJ / ATCC BAA-1303), this protein is NADPH-dependent 7-cyano-7-deazaguanine reductase.